The sequence spans 398 residues: S-adenosylmethionine synthase (398 aa).

His16 is a binding site for ATP. Residue Asp18 coordinates Mg(2+). Glu51 provides a ligand contact to K(+). Positions 64 and 108 each coordinate L-methionine. Residues 108-118 (QSADIAQGVDA) are flexible loop. ATP contacts are provided by residues 176–178 (DSK), 242–243 (KF), Asp251, 257–258 (RK), Ala274, and Lys278. L-methionine is bound at residue Asp251. Lys282 contributes to the L-methionine binding site.

The protein belongs to the AdoMet synthase family. In terms of assembly, homotetramer; dimer of dimers. The cofactor is Mg(2+). It depends on K(+) as a cofactor.

The protein resides in the cytoplasm. The catalysed reaction is L-methionine + ATP + H2O = S-adenosyl-L-methionine + phosphate + diphosphate. It participates in amino-acid biosynthesis; S-adenosyl-L-methionine biosynthesis; S-adenosyl-L-methionine from L-methionine: step 1/1. Its function is as follows. Catalyzes the formation of S-adenosylmethionine (AdoMet) from methionine and ATP. The overall synthetic reaction is composed of two sequential steps, AdoMet formation and the subsequent tripolyphosphate hydrolysis which occurs prior to release of AdoMet from the enzyme. The protein is S-adenosylmethionine synthase of Nitrobacter hamburgensis (strain DSM 10229 / NCIMB 13809 / X14).